We begin with the raw amino-acid sequence, 111 residues long: MAYQLYRNTTLGNSLQESLDELIQTQQITPQLALQVLLQFDKAINTALASRVRNRVNFRGSLNTYRFCDNVWTFVLNDVEFREVTDLVKVDKVKIVACDGKSESTQNKSDK.

The protein belongs to the TFIIA subunit 2 family. TFIIA is a heterodimer of the large unprocessed subunit 1 and a small subunit gamma. It was originally believed to be a heterotrimer of an alpha, a beta and a gamma subunit. Interacts with NCOA6 general coactivator. TFIIA forms a complex with TBP.

It is found in the nucleus. Functionally, TFIIA is a component of the transcription machinery of RNA polymerase II and plays an important role in transcriptional activation. TFIIA in a complex with TBP mediates transcriptional activity. The sequence is that of Transcription initiation factor IIA subunit 2 (gtf2a2) from Paralichthys olivaceus (Bastard halibut).